Reading from the N-terminus, the 1502-residue chain is Heme-responsive zinc finger transcription factor HAP1 (1502 aa).

The span at 1–50 (MSNTPYNSSVPSIASMTQSSVSRSPNMHTATTPGANTSSNSPPLHMSSDS) shows a compositional bias: polar residues. The disordered stretch occupies residues 1-56 (MSNTPYNSSVPSIASMTQSSVSRSPNMHTATTPGANTSSNSPPLHMSSDSSKIKRK). Zn(2+) is bound by residues cysteine 64, cysteine 67, cysteine 74, cysteine 81, cysteine 84, and cysteine 93. Residues 64 to 93 (CTICRKRKVKCDKLRPHCQQCTKTGVAHLC) constitute a DNA-binding region (zn(2)-C6 fungal-type). A coiled-coil region spans residues 105–134 (EKELLKDNELKKLRERVKSLEKTLSKVHSS). A disordered region spans residues 126–208 (KTLSKVHSSP…ANSSSLSISN (83 aa)). Residues 130–142 (KVHSSPSSNSLKS) show a composition bias toward low complexity. Polar residues-rich tracts occupy residues 143 to 152 (YNTPESSNLF) and 160 to 176 (TLVNANTGSASSASHMH). Low complexity predominate over residues 177 to 208 (QQQQQQQQQEQQQDFSRSANANANSSSLSISN). The tract at residues 244 to 444 (KGDPYLKLLW…NTIPHHQPQS (201 aa)) is heme-responsive; required for HMC formation. HRM repeat units lie at residues 280 to 285 (KCPINH), 299 to 304 (KCPVDH), 323 to 328 (KCPVDH), 347 to 352 (RCPVDH), 389 to 394 (KCPVDH), and 415 to 420 (RCPIDH). Composition is skewed to polar residues over residues 432 to 447 (STHNTIPHHQPQSGSH) and 706 to 734 (QLNATIPATSQDVSNNGSKKANPSTNPTL). Disordered stretches follow at residues 432–458 (STHNTIPHHQPQSGSHARSHPAQSRKH) and 706–767 (QLNA…KENQ). Positions 735–759 (NNNMSAATTNSSSRSGSADSRSGSN) are enriched in low complexity. An HRM 7 repeat occupies 1192–1197 (KCPVYQ). The segment at 1384-1411 (TANTDTSANGSALSTLTSPQGSDLASNS) is disordered. The span at 1388–1411 (DTSANGSALSTLTSPQGSDLASNS) shows a compositional bias: polar residues.

Binds DNA as a homodimer. Interacts with SRO9 and YDJ1. In the absence of heme, binds to at least four cellular proteins, including YDJ1 and SRO9, forming a high-molecular-weight complex (HMC) which results in repression of its activity and dictates its DNA-binding specificity.

It localises to the nucleus. In terms of biological role, regulation of oxygen dependent gene expression. It modulates the expression of Iso-1 (CYP1) and Iso-2 (CYP3) cytochrome c. In response to heme, promotes transcription of genes encoding functions required for respiration, controlling oxidative damage and repression of anaerobic genes. Binds to the sequence 5'-CGGNNNTNNCGG-3'. Is non-functional in terms of iso-1 cytochrome c expression in strain S288c and its derivatives. The chain is Heme-responsive zinc finger transcription factor HAP1 (HAP1) from Saccharomyces cerevisiae (strain ATCC 204508 / S288c) (Baker's yeast).